The sequence spans 199 residues: Protein-L-isoaspartate O-methyltransferase (199 aa).

S51 is an active-site residue.

It belongs to the methyltransferase superfamily. L-isoaspartyl/D-aspartyl protein methyltransferase family.

The protein localises to the cytoplasm. It carries out the reaction [protein]-L-isoaspartate + S-adenosyl-L-methionine = [protein]-L-isoaspartate alpha-methyl ester + S-adenosyl-L-homocysteine. Catalyzes the methyl esterification of L-isoaspartyl residues in peptides and proteins that result from spontaneous decomposition of normal L-aspartyl and L-asparaginyl residues. It plays a role in the repair and/or degradation of damaged proteins. The protein is Protein-L-isoaspartate O-methyltransferase of Fervidobacterium nodosum (strain ATCC 35602 / DSM 5306 / Rt17-B1).